Here is a 185-residue protein sequence, read N- to C-terminus: MDDGVEAKPLCLTREQIDKQVERLSRRPEQRTLPDPFPVCPTVRMSKEQLEQVTKRVFYHYSEKHAEALRLAEERREKECGVASTVLSASDVDDIVKRLYYEGMERVKVGRKEASDRLLFKSTKVLPVISLKRFVNDMYLRGLEREKKKEEKLYEKYILPTEIPNLRISKSQAAESAMRLSRRHE.

This is an uncharacterized protein from Trypanosoma brucei brucei.